The primary structure comprises 419 residues: Argininosuccinate synthase (419 aa).

9 to 17 (AYSGGLDTS) contributes to the ATP binding site. Tyr87 contacts L-citrulline. Gly117 contributes to the ATP binding site. Residues Thr119, Asn123, and Asp124 each coordinate L-aspartate. L-citrulline is bound at residue Asn123. Residues Arg127, Ser175, Ser184, Glu260, and Tyr272 each contribute to the L-citrulline site.

It belongs to the argininosuccinate synthase family. Type 1 subfamily. In terms of assembly, homotetramer.

The protein resides in the cytoplasm. The catalysed reaction is L-citrulline + L-aspartate + ATP = 2-(N(omega)-L-arginino)succinate + AMP + diphosphate + H(+). It participates in amino-acid biosynthesis; L-arginine biosynthesis; L-arginine from L-ornithine and carbamoyl phosphate: step 2/3. The chain is Argininosuccinate synthase from Brevibacillus brevis (strain 47 / JCM 6285 / NBRC 100599).